A 323-amino-acid chain; its full sequence is Peroxisomal and mitochondrial division factor 2 (323 aa).

3 disordered regions span residues methionine 1–isoleucine 55, glutamate 73–glutamate 92, and threonine 120–glycine 143. Over methionine 1–serine 297 the chain is Cytoplasmic. Positions glycine 13–glycine 26 are enriched in acidic residues. Positions aspartate 28–glutamate 278 form a coiled coil. A helical membrane pass occupies residues glycine 298–tyrosine 318. At histidine 319 to valine 323 the chain is on the mitochondrial intermembrane side.

Homodimer. Interacts with PMD1.

It localises to the mitochondrion outer membrane. Involved in morphogenesis and proliferation of mitochondria. Does not act redundantly with PMD1. Is not involved in peroxisomal proliferation. This Arabidopsis thaliana (Mouse-ear cress) protein is Peroxisomal and mitochondrial division factor 2.